A 199-amino-acid polypeptide reads, in one-letter code: MNKFIVFEGIDGCGKTTQAKLIAERLNAKFTFEPTDGKIGKSIREILSGSKCQKETLALLFAADRVEHVSKIEEDLKKSHIVSDRYVYSSIVYQMSQGIPKDFIYTINDYAKTPDLVVLLDVDLNEALKRMESREKEIFEKIEIQKKIKEGYYSLINSENEKFMPTYGFIIIDTTSKSINQVFDEILNAIIDKIPDIIQ.

9-16 (GIDGCGKT) is an ATP binding site.

It belongs to the thymidylate kinase family.

It carries out the reaction dTMP + ATP = dTDP + ADP. The polypeptide is Probable thymidylate kinase (Methanococcus maripaludis (strain C6 / ATCC BAA-1332)).